The sequence spans 499 residues: Dual specificity protein kinase CLK2 (499 aa).

Positions 1–67 are disordered; the sequence is MPHPRRYHSS…SYDDRSSDRR (67 aa). Positions 8–21 are enriched in basic and acidic residues; that stretch reads HSSERGSRGSYREH. Basic residues predominate over residues 22–33; the sequence is YRSRKHKRRRSR. Residue Ser34 is modified to Phosphoserine; by PKB/AKT1. Residues 47–67 show a composition bias toward basic and acidic residues; that stretch reads REDSYHVRSRSSYDDRSSDRR. Ser98 carries the phosphoserine modification. Tyr99 carries the phosphotyrosine; by autocatalysis modification. A disordered region spans residues 101–143; the sequence is YQRENSSYRSQRSSRRKHRRRRRRSRTFSRSSSQHSSRRAKSV. The span at 112 to 127 shows a compositional bias: basic residues; that stretch reads RSSRRKHRRRRRRSRT. Thr127 is modified (phosphothreonine; by PKB/AKT1). Residue Ser142 is modified to Phosphoserine; by autocatalysis. A Phosphotyrosine modification is found at Tyr153. The 317-residue stretch at 163–479 folds into the Protein kinase domain; that stretch reads YEIVSTLGEG…LGEALQHPFF (317 aa). ATP-binding positions include 169 to 177 and Lys193; that span reads LGEGTFGRV. Asp290 acts as the Proton acceptor in catalysis. A Phosphothreonine; by PKB/AKT2 modification is found at Thr344.

The protein belongs to the protein kinase superfamily. CMGC Ser/Thr protein kinase family. Lammer subfamily. As to quaternary structure, interacts with RBMX. Interacts with AKT1 and UBL5. Post-translationally, autophosphorylates on all three types of residues. Phosphorylation on Ser-34 and Thr-127 by AKT1 is induced by ionizing radiation or insulin. Phosphorylation plays a critical role in cell proliferation following low dose radiation and prevents cell death following high dose radiation. Phosphorylation at Thr-344 by PKB/AKT2 induces its kinase activity which is required for its stability. The phosphorylation status at Ser-142 influences its subnuclear localization; inhibition of phosphorylation at Ser-142 results in accumulation in the nuclear speckle. In terms of tissue distribution, endothelial cells. Expressed in androgen-dependent prostate cancer cells.

The protein localises to the nucleus. It is found in the nucleus speckle. The catalysed reaction is L-seryl-[protein] + ATP = O-phospho-L-seryl-[protein] + ADP + H(+). The enzyme catalyses L-threonyl-[protein] + ATP = O-phospho-L-threonyl-[protein] + ADP + H(+). It carries out the reaction L-tyrosyl-[protein] + ATP = O-phospho-L-tyrosyl-[protein] + ADP + H(+). 5,6-dichloro-1-b-D-ribofuranosylbenzimidazole (DRB) inhibits autophosphorylation. TG003 inhibits its kinase activity and affects the regulation of alternative splicing mediated by phosphorylation of SR proteins. Functionally, dual specificity kinase acting on both serine/threonine and tyrosine-containing substrates. Phosphorylates serine- and arginine-rich (SR) proteins of the spliceosomal complex. May be a constituent of a network of regulatory mechanisms that enable SR proteins to control RNA splicing and can cause redistribution of SR proteins from speckles to a diffuse nucleoplasmic distribution. Acts as a suppressor of hepatic gluconeogenesis and glucose output by repressing PPARGC1A transcriptional activity on gluconeogenic genes via its phosphorylation. Phosphorylates PPP2R5B thereby stimulating the assembly of PP2A phosphatase with the PPP2R5B-AKT1 complex leading to dephosphorylation of AKT1. Phosphorylates: PTPN1, SRSF1 and SRSF3. Regulates the alternative splicing of tissue factor (F3) pre-mRNA in endothelial cells. Phosphorylates PAGE4 at several serine and threonine residues and this phosphorylation attenuates the ability of PAGE4 to potentiate the transcriptional activator activity of JUN. This chain is Dual specificity protein kinase CLK2 (CLK2), found in Homo sapiens (Human).